Consider the following 126-residue polypeptide: Small ribosomal subunit protein uS13 (126 aa).

The segment at 92–126 (RMGLPVRGQRTRTNARTRRGGRRTVAGKKKAPAKK) is disordered. Basic residues predominate over residues 100-126 (QRTRTNARTRRGGRRTVAGKKKAPAKK).

This sequence belongs to the universal ribosomal protein uS13 family. As to quaternary structure, part of the 30S ribosomal subunit. Forms a loose heterodimer with protein S19. Forms two bridges to the 50S subunit in the 70S ribosome.

Its function is as follows. Located at the top of the head of the 30S subunit, it contacts several helices of the 16S rRNA. In the 70S ribosome it contacts the 23S rRNA (bridge B1a) and protein L5 of the 50S subunit (bridge B1b), connecting the 2 subunits; these bridges are implicated in subunit movement. Contacts the tRNAs in the A and P-sites. The chain is Small ribosomal subunit protein uS13 from Cyanothece sp. (strain PCC 7425 / ATCC 29141).